Consider the following 325-residue polypeptide: UPF0164 protein TP_0856 (325 aa).

The N-terminal stretch at 1–28 is a signal peptide; the sequence is MVHYKSVFYKSAALVCGFVLAGASVAIA.

Belongs to the UPF0164 family.

The sequence is that of UPF0164 protein TP_0856 from Treponema pallidum (strain Nichols).